The following is a 518-amino-acid chain: MDESRRQRPAGHVAANLSPQGARQRSFKDWLASYVHSNPHGASGRPSGPSLQDAAVSRSSHGSRHRSGLRERLRAGLSRWRMSRSSHRRASPETPGTAAKLNRPPLRRSQAALTAPPSSPSHILTLTRIRKLCSPVFAINPALHYTTLEIPGARSFGGSGGYGDVQLIREHKLAVKTIKEKEWFAVELIATLLVGECVLRAGRTHNIRGFIAPLGFSLQQRQIVFPAYDMDLGKYIGQLASLRTTNPSVSTALHQCFTELARAVVFLNTTCGISHLDIKCANILVMLRSDAVSLRRAVLADFSLVTLNSNSTIARGQFCLQEPDLKSPRMFGMPTALTTANFHTLVGHGYNQPPELLVKYLNNERAEFTNHRLKHDVGLAVDLYALGQTLLELVVSVYVAPSLGVPVTRFPGYQYFNNQLSPDFALALLAYRCVLHPALFVNSAETNTHGLAYDVPEGIRRHLRNPKIRRAFTDRCINYQHTHKAILSSVALPPELKPLLVLVSRLCHTNPCARHALS.

The interval 1-119 (MDESRRQRPA…QAALTAPPSS (119 aa)) is disordered. A Protein kinase domain is found at 151–518 (PGARSFGGSG…TNPCARHALS (368 aa)). ATP-binding positions include 157–165 (GGSGGYGDV) and K176. The active-site Proton acceptor is D277.

It belongs to the protein kinase superfamily. Ser/Thr protein kinase family. Post-translationally, autophosphorylated.

It localises to the virion tegument. Its subcellular location is the host nucleus. The catalysed reaction is L-seryl-[protein] + ATP = O-phospho-L-seryl-[protein] + ADP + H(+). The enzyme catalyses L-threonyl-[protein] + ATP = O-phospho-L-threonyl-[protein] + ADP + H(+). Multifunctional serine/threonine kinase that plays a role in several processes including egress of virus particles from the nucleus, modulation of the actin cytoskeleton and regulation of viral and cellular gene expression. Regulates the nuclear localization of viral envelopment factors UL34 and UL31, by phosphorylating the US3 kinase, indicating a role in nuclear egress. Disrupts host nuclear lamins, including LMNA and LMNB1. Phosphorylates the viral Fc receptor composed of glycoproteins E (gE) and I (gI). Phosphorylation of glycoprotein E (gE) by UL13 alters its subcellular localization, from the host early endosome to the plasma membrane. Participates in the transcriptional regulation of cellular and viral mRNAs mainly by phosphorylating the viral transcriptional regulator ICP22. Additional substrates have been identified, including UL41, UL49 or host EF1D. The protein is Serine/threonine-protein kinase UL13 of Homo sapiens (Human).